Here is a 56-residue protein sequence, read N- to C-terminus: Ovomucoid (56 aa).

One can recognise a Kazal-like domain in the interval 6-56; it reads VDCSEYPKPDCTLEYRPLCGSDNKTYANKCNFCNAVVESNGTLTLSHFGKC. 3 disulfide bridges follow: cysteine 8-cysteine 38, cysteine 16-cysteine 35, and cysteine 24-cysteine 56. N-linked (GlcNAc...) asparagine glycosylation occurs at asparagine 45.

It localises to the secreted. This is Ovomucoid from Callipepla squamata castanogastris (Chestnut bellied scaled quail).